The primary structure comprises 27 residues: Snake venom serine protease Afaacytin alpha/beta/beta' chains (27 aa).

One can recognise a Peptidase S1 domain in the interval 1-27 (VIGGAECNINEHRSLVLLYXSSSXFGE).

It belongs to the peptidase S1 family. Snake venom subfamily. In terms of assembly, heterodimer of an alpha and a beta chain. Subunit beta is constituted of two disulfide-linked polypeptidic chains, beta and beta'. Calcium appears to be required for structural cohesion of the molecule. Post-translationally, both chains alpha and beta are N-glycosylated. Expressed by the venom gland.

It localises to the secreted. Its activity is regulated as follows. Inhibited by diisopropylfluorophosphate (DFP), benzamidine, heparin and hirudin, but not by plasmatic thrombin inhibitors, antithrombin-III and ecotin. Functionally, snake venom serine protease that exhibits alpha-fibrinase and beta-fibrinogenase activities. It replaces missing factors VIII (F8) and IX (F9) in deficient plasmas by activating purified human factor X (F10) into factor Xa. It releases serotonin from platelets and induces platelet aggregation in human (but not in rabbit). Has caseinolytic, arginine-esterase and amidase activities. The polypeptide is Snake venom serine protease Afaacytin alpha/beta/beta' chains (Cerastes cerastes (Horned desert viper)).